The following is a 263-amino-acid chain: Indolethylamine N-methyltransferase (263 aa).

Lysine 13 carries the N6-succinyllysine modification. S-adenosyl-L-methionine is bound by residues tyrosine 20, tyrosine 25, 63–64 (GS), tyrosine 69, aspartate 85, and asparagine 90. An N6-succinyllysine modification is found at lysine 96. Residues 142 to 143 (DA) and leucine 163 each bind S-adenosyl-L-methionine.

The protein belongs to the class I-like SAM-binding methyltransferase superfamily. NNMT/PNMT/TEMT family. As to quaternary structure, monomer. As to expression, highly expressed in lung, also detected in liver and at very low levels in brain.

It localises to the cytoplasm. It catalyses the reaction a tertiary amine + S-adenosyl-L-methionine = a methylated tertiary amine + S-adenosyl-L-homocysteine + H(+). The enzyme catalyses a secondary amine + S-adenosyl-L-methionine = a methylated secondary amine + S-adenosyl-L-homocysteine + H(+). The catalysed reaction is a primary amine + S-adenosyl-L-methionine = a methylated primary amine + S-adenosyl-L-homocysteine + H(+). It carries out the reaction dimethyl sulfide + S-adenosyl-L-methionine = trimethylsulfonium + S-adenosyl-L-homocysteine. Functionally, catalyzes the N-methylation of tryptamine and structurally related compounds. Functions as a thioether S-methyltransferase and is active with a variety of thioethers and the corresponding selenium and tellurium compounds, including 3-methylthiopropionaldehyde, dimethyl selenide, dimethyl telluride, 2-methylthioethylamine, 2-methylthioethanol, methyl-n-propyl sulfide and diethyl sulfide. Plays an important role in the detoxification of selenium compounds. The sequence is that of Indolethylamine N-methyltransferase (INMT) from Oryctolagus cuniculus (Rabbit).